Reading from the N-terminus, the 189-residue chain is Elongation factor P (189 aa).

It belongs to the elongation factor P family.

The protein localises to the cytoplasm. The protein operates within protein biosynthesis; polypeptide chain elongation. Functionally, involved in peptide bond synthesis. Stimulates efficient translation and peptide-bond synthesis on native or reconstituted 70S ribosomes in vitro. Probably functions indirectly by altering the affinity of the ribosome for aminoacyl-tRNA, thus increasing their reactivity as acceptors for peptidyl transferase. In Onion yellows phytoplasma (strain OY-M), this protein is Elongation factor P.